A 365-amino-acid polypeptide reads, in one-letter code: MRVLLAGGGTAGHTSPLLATADALRRLEPDVEITCLGTPRGLENKVVPEAGYPLELIPPVPLPRRPGADLLKVPFRLRAAVRATHAVLDRVRPDVVVGYGGYVSMPAYVATRKRGIPLVVHEQNTVPGLANRAGARFAQRVAVSFPDTPLRNAEYVGLPIRPMISGLDRAARRAEARAFFGLDPDRPTLLVTGGSQGARRLNQAVSAAAGALAATGVQVLHAQGKHGGADPQPGAEETGVPYVVVEYIDRMDLAYAAADLVICRAGANSVTEAAAVGLPAVFVPLPIGNGEQERNARPVIDAGGGILVKDADLTTDWVVGTVPPLVADAERLAAMGAAAAALIPRDADERLARIVLELGLGSSAR.

Residues 10-12 (TAG), Asn-124, Arg-161, Ser-195, Ile-248, and Gln-292 contribute to the UDP-N-acetyl-alpha-D-glucosamine site.

This sequence belongs to the glycosyltransferase 28 family. MurG subfamily.

The protein resides in the cell membrane. It catalyses the reaction di-trans,octa-cis-undecaprenyl diphospho-N-acetyl-alpha-D-muramoyl-L-alanyl-D-glutamyl-meso-2,6-diaminopimeloyl-D-alanyl-D-alanine + UDP-N-acetyl-alpha-D-glucosamine = di-trans,octa-cis-undecaprenyl diphospho-[N-acetyl-alpha-D-glucosaminyl-(1-&gt;4)]-N-acetyl-alpha-D-muramoyl-L-alanyl-D-glutamyl-meso-2,6-diaminopimeloyl-D-alanyl-D-alanine + UDP + H(+). The protein operates within cell wall biogenesis; peptidoglycan biosynthesis. Functionally, cell wall formation. Catalyzes the transfer of a GlcNAc subunit on undecaprenyl-pyrophosphoryl-MurNAc-pentapeptide (lipid intermediate I) to form undecaprenyl-pyrophosphoryl-MurNAc-(pentapeptide)GlcNAc (lipid intermediate II). The sequence is that of UDP-N-acetylglucosamine--N-acetylmuramyl-(pentapeptide) pyrophosphoryl-undecaprenol N-acetylglucosamine transferase from Nocardioides sp. (strain ATCC BAA-499 / JS614).